Reading from the N-terminus, the 863-residue chain is Protein ARG5,6, mitochondrial (863 aa).

Residues 1–65 (MPSASLLVST…RYVSSTNGFS (65 aa)) constitute a mitochondrion transit peptide. One can recognise an N-acetyltransferase domain in the interval 353 to 505 (KLVKRSSIGE…NFVKSCDTAS (153 aa)). Ser-359 is subject to Phosphoserine. Cys-675 is a catalytic residue.

In the N-terminal section; belongs to the acetylglutamate kinase family. It in the C-terminal section; belongs to the NAGSA dehydrogenase family. The protein precursor is cleaved into the two biologically active enzymes, the kinase and the reductase.

It localises to the mitochondrion. It catalyses the reaction N-acetyl-L-glutamate 5-semialdehyde + phosphate + NADP(+) = N-acetyl-L-glutamyl 5-phosphate + NADPH + H(+). The enzyme catalyses N-acetyl-L-glutamate + ATP = N-acetyl-L-glutamyl 5-phosphate + ADP. Its pathway is amino-acid biosynthesis; L-arginine biosynthesis; N(2)-acetyl-L-ornithine from L-glutamate: step 2/4. It participates in amino-acid biosynthesis; L-arginine biosynthesis; N(2)-acetyl-L-ornithine from L-glutamate: step 3/4. With respect to regulation, the kinase activity is inhibited by arginine. The sequence is that of Protein ARG5,6, mitochondrial (ARG5,6) from Saccharomyces cerevisiae (strain ATCC 204508 / S288c) (Baker's yeast).